A 218-amino-acid polypeptide reads, in one-letter code: Probable nicotinate-nucleotide adenylyltransferase (218 aa).

The protein belongs to the NadD family.

It catalyses the reaction nicotinate beta-D-ribonucleotide + ATP + H(+) = deamido-NAD(+) + diphosphate. It participates in cofactor biosynthesis; NAD(+) biosynthesis; deamido-NAD(+) from nicotinate D-ribonucleotide: step 1/1. Catalyzes the reversible adenylation of nicotinate mononucleotide (NaMN) to nicotinic acid adenine dinucleotide (NaAD). The sequence is that of Probable nicotinate-nucleotide adenylyltransferase from Helicobacter hepaticus (strain ATCC 51449 / 3B1).